Consider the following 305-residue polypeptide: Homoserine O-acetyltransferase (305 aa).

Cysteine 142 (acyl-thioester intermediate) is an active-site residue. The substrate site is built by lysine 163 and serine 192. Residue histidine 235 is the Proton acceptor of the active site. Glutamate 237 is an active-site residue. Arginine 249 contributes to the substrate binding site.

It belongs to the MetA family.

It localises to the cytoplasm. It catalyses the reaction L-homoserine + acetyl-CoA = O-acetyl-L-homoserine + CoA. The protein operates within amino-acid biosynthesis; L-methionine biosynthesis via de novo pathway; O-acetyl-L-homoserine from L-homoserine: step 1/1. Its function is as follows. Transfers an acetyl group from acetyl-CoA to L-homoserine, forming acetyl-L-homoserine. This chain is Homoserine O-acetyltransferase, found in Cereibacter sphaeroides (strain ATCC 17025 / ATH 2.4.3) (Rhodobacter sphaeroides).